The sequence spans 784 residues: Transcriptional activator somA (784 aa).

The region spanning 43–75 is the LisH domain; sequence MINNLNTYIYDYFLKRGYHECARALVKDESIKL. Residues 75 to 84 are compositionally biased toward polar residues; that stretch reads LNTEPPTKTS. Disordered regions lie at residues 75 to 122, 212 to 295, 424 to 726, and 764 to 784; these read LNTE…PNLA, GLSQ…SQAL, MMAR…DLSI, and GFDPNISYPTDGVETGAGDGL. Over residues 103-117 the composition is skewed to basic and acidic residues; sequence DSKDGDKIKIPDDLP. Residues 215 to 233 are compositionally biased toward low complexity; that stretch reads QQQIAQLQKNQQMHMMQQM. Residues 234-244 show a composition bias toward basic and acidic residues; that stretch reads QREHSDMDMNG. Low complexity predominate over residues 247–259; sequence PQSPSSAENAPSP. Positions 453 to 467 are enriched in polar residues; the sequence is SPQGSRAGTSPNPNE. Residues 564–592 show a composition bias toward low complexity; the sequence is QQQQGQPMGPQQSPAQQPQSTGTPQTQNS. Over residues 607–624 the composition is skewed to polar residues; the sequence is RTSPQSQNAAPPTPQQAN. Basic and acidic residues predominate over residues 629 to 638; sequence KKREPKDTAR. 2 stretches are compositionally biased toward low complexity: residues 644-661 and 691-701; these read KQPAAAAAAANTAATPSS and PTTSAPQQPTS. The segment covering 702-715 has biased composition (pro residues); sequence APAPQPIVQQPPPD.

It belongs to the FLO8 family. As to quaternary structure, interacts with ptaB.

Its subcellular location is the nucleus. Its function is as follows. Transcription factor that controls the expression of genes related to the process of conidiation and adherence and regulates biofilm formation. Controls conidiation and adhesion primarily by affecting the expression of the three regulatory genes flbB, stuA and medA. Required for virulence in an egg and a mouse infection model. This chain is Transcriptional activator somA, found in Aspergillus fumigatus (strain ATCC MYA-4609 / CBS 101355 / FGSC A1100 / Af293) (Neosartorya fumigata).